The following is a 280-amino-acid chain: Urease accessory protein UreD 1 (280 aa).

This sequence belongs to the UreD family. UreD, UreF and UreG form a complex that acts as a GTP-hydrolysis-dependent molecular chaperone, activating the urease apoprotein by helping to assemble the nickel containing metallocenter of UreC. The UreE protein probably delivers the nickel.

It is found in the cytoplasm. Required for maturation of urease via the functional incorporation of the urease nickel metallocenter. The sequence is that of Urease accessory protein UreD 1 from Brucella abortus biovar 1 (strain 9-941).